The following is a 155-amino-acid chain: 6,7-dimethyl-8-ribityllumazine synthase (155 aa).

Residues Phe-23, 57-59 (AFE), and 81-83 (AVI) each bind 5-amino-6-(D-ribitylamino)uracil. 86–87 (ST) is a (2S)-2-hydroxy-3-oxobutyl phosphate binding site. Catalysis depends on His-89, which acts as the Proton donor. Phe-114 lines the 5-amino-6-(D-ribitylamino)uracil pocket. Arg-128 contributes to the (2S)-2-hydroxy-3-oxobutyl phosphate binding site.

Belongs to the DMRL synthase family.

The enzyme catalyses (2S)-2-hydroxy-3-oxobutyl phosphate + 5-amino-6-(D-ribitylamino)uracil = 6,7-dimethyl-8-(1-D-ribityl)lumazine + phosphate + 2 H2O + H(+). The protein operates within cofactor biosynthesis; riboflavin biosynthesis; riboflavin from 2-hydroxy-3-oxobutyl phosphate and 5-amino-6-(D-ribitylamino)uracil: step 1/2. Functionally, catalyzes the formation of 6,7-dimethyl-8-ribityllumazine by condensation of 5-amino-6-(D-ribitylamino)uracil with 3,4-dihydroxy-2-butanone 4-phosphate. This is the penultimate step in the biosynthesis of riboflavin. The protein is 6,7-dimethyl-8-ribityllumazine synthase of Geobacter sulfurreducens (strain ATCC 51573 / DSM 12127 / PCA).